The sequence spans 249 residues: General transcription factor IIF subunit 2 (249 aa).

An N-acetylalanine modification is found at A2. K22, K33, and K137 each carry N6-acetyllysine. S142 carries the post-translational modification Phosphoserine. G227 and H229 together coordinate DNA. Position 248 is a phosphoserine (S248).

This sequence belongs to the TFIIF beta subunit family. Heterodimer of an alpha and a beta subunit. Interacts with HTATSF1 and GPBP1. Interacts with URI1. Interacts with GTF2B (via N-terminus); this interaction is inhibited in presence of GTF2F1. Part of TBP-based Pol II pre-initiation complex (PIC), in which Pol II core assembles with general transcription factors and other specific initiation factors including GTF2E1, GTF2E2, GTF2F1, GTF2F2, TCEA1, ERCC2, ERCC3, GTF2H2, GTF2H3, GTF2H4, GTF2H5, GTF2A1, GTF2A2, GTF2B and TBP; this large multi-subunit PIC complex mediates DNA unwinding and targets Pol II core to the transcription start site where the first phosphodiester bond forms.

The protein localises to the nucleus. Functionally, TFIIF is a general transcription initiation factor that binds to RNA polymerase II and helps to recruit it to the initiation complex in collaboration with TFIIB. This Homo sapiens (Human) protein is General transcription factor IIF subunit 2 (GTF2F2).